The chain runs to 108 residues: MFMAENRLQLQKGSAEETIERFYNRQGIETIEGFQQMFVTKTLNTKDTDEVKILTIWESEDSFNNWLNSDVFKEAHKNVRLKSDDDGQQSPILSNKVFKYDIGYHYQK.

The region spanning 2-93 (FMAENRLQLQ…DDDGQQSPIL (92 aa)) is the ABM domain. A Fe cation-binding site is contributed by asparagine 6. Heme contacts are provided by residues 21–28 (RFYNRQGI) and histidine 76.

This sequence belongs to the antibiotic biosynthesis monooxygenase family. Heme-degrading monooxygenase IsdG subfamily. Homodimer.

Its subcellular location is the cytoplasm. It catalyses the reaction heme b + 5 AH2 + 4 O2 + 2 H(+) = delta-staphylobilin + Fe(2+) + formaldehyde + 5 A + 4 H2O. The catalysed reaction is heme b + 5 AH2 + 4 O2 + 2 H(+) = beta-staphylobilin + Fe(2+) + formaldehyde + 5 A + 4 H2O. In terms of biological role, allows bacterial pathogens to use the host heme as an iron source. Catalyzes the oxidative degradation of the heme macrocyclic porphyrin ring to the oxo-bilirubin chromophore staphylobilin (a mixture of the linear tetrapyrroles 5-oxo-delta-bilirubin and 15-oxo-beta-bilirubin) in the presence of a suitable electron donor such as ascorbate or NADPH--cytochrome P450 reductase, with subsequent release of free iron. In Staphylococcus aureus (strain MRSA252), this protein is Heme oxygenase (staphylobilin-producing) 2 (isdI).